Reading from the N-terminus, the 20-residue chain is Large ribosomal subunit protein uL10 (20 aa).

Belongs to the universal ribosomal protein uL10 family. Part of the ribosomal stalk of the 50S ribosomal subunit. The N-terminus interacts with L11 and the large rRNA to form the base of the stalk. The C-terminus forms an elongated spine to which L12 dimers bind in a sequential fashion forming a multimeric L10(L12)X complex.

Forms part of the ribosomal stalk, playing a central role in the interaction of the ribosome with GTP-bound translation factors. This Citrobacter freundii protein is Large ribosomal subunit protein uL10 (rplJ).